A 336-amino-acid polypeptide reads, in one-letter code: 3-isopropylmalate dehydrogenase (336 aa).

Substrate contacts are provided by Arg87, Arg97, Arg121, and Asp211. Asp211, Asp235, and Asp239 together coordinate Mg(2+). Gly271 to Asp283 lines the NAD(+) pocket.

It belongs to the isocitrate and isopropylmalate dehydrogenases family. LeuB type 2 subfamily. Homodimer. Mg(2+) serves as cofactor. It depends on Mn(2+) as a cofactor.

The protein resides in the cytoplasm. The enzyme catalyses (2R,3S)-3-isopropylmalate + NAD(+) = 4-methyl-2-oxopentanoate + CO2 + NADH. Its pathway is amino-acid biosynthesis; L-leucine biosynthesis; L-leucine from 3-methyl-2-oxobutanoate: step 3/4. Its function is as follows. Catalyzes the oxidation of 3-carboxy-2-hydroxy-4-methylpentanoate (3-isopropylmalate) to 3-carboxy-4-methyl-2-oxopentanoate. The product decarboxylates to 4-methyl-2 oxopentanoate. The chain is 3-isopropylmalate dehydrogenase from Mycolicibacterium paratuberculosis (strain ATCC BAA-968 / K-10) (Mycobacterium paratuberculosis).